We begin with the raw amino-acid sequence, 814 residues long: DNA topoisomerase 1 (814 aa).

Residues 1–12 (MSSSDSDSVSLS) are compositionally biased toward low complexity. The segment at 1 to 180 (MSSSDSDSVS…PNDEEDEDED (180 aa)) is disordered. Residues 13 to 22 (IRRRQRRGSS) show a composition bias toward basic residues. Phosphoserine occurs at positions 52, 54, and 136. The residue at position 138 (Thr-138) is a Phosphothreonine. Interaction with DNA stretches follow at residues 404-405 (KY), 467-472 (RAGNEK), and 559-561 (SAK). The region spanning 411 to 814 (GSSLKGQSDL…AADTPPDWKW (404 aa)) is the Topo IB-type catalytic domain. Tyr-773 functions as the O-(3'-phospho-DNA)-tyrosine intermediate in the catalytic mechanism.

This sequence belongs to the type IB topoisomerase family. Monomer.

It catalyses the reaction ATP-independent breakage of single-stranded DNA, followed by passage and rejoining.. Releases the supercoiling and torsional tension of DNA introduced during the DNA replication and transcription by transiently cleaving and rejoining one strand of the DNA duplex. Introduces a single-strand break via transesterification at a target site in duplex DNA. The scissile phosphodiester is attacked by the catalytic tyrosine of the enzyme, resulting in the formation of a DNA-(3'-phosphotyrosyl)-enzyme intermediate and the expulsion of a 5'-OH DNA strand. TThe free DNA strand then rotates around the intact phosphodiester bond on the opposing strand, thus removing DNA supercoils. Finally, in the religation step, the DNA 5'-OH attacks the covalent intermediate to expel the active-site tyrosine and restore the DNA phosphodiester backbone. This chain is DNA topoisomerase 1 (top1), found in Schizosaccharomyces pombe (strain 972 / ATCC 24843) (Fission yeast).